We begin with the raw amino-acid sequence, 423 residues long: MGFPRLWAALLRNWGRWTARPGPRVPGLPPMAGNKVPPALASHQPDRKGRGGWVWEETEHPAKRVKGGEDEEPPRKLPKRKIVLLMAYSGKGYHGMQRNLGSSQFRTIEDDLVSALVQAGCIPENHGTDMRKMSFQRCARTDKGVSAAGQVVSLKVWLIDDILDKINSHLPSHIRILGLKRVTGGFNSKNKCDARTYCYMLPTFAFAHKDRDVQDESYRLSAETLQQVNRLLACYKGTHNFHNFTSQKGPREPSARRYILEMYCEEPFVREGLEFAVIKVKGQSFMMHQIRKMVGLVVAIVKGYAPESVLERSWGEEKVDVPKAPGLGLVLERVHFEKYNQRFGGDGLHEPLDWTQEEGKVTAFKEQYIYPTIVSTERDERSMAQWLNTLPIHNFSGTALGAADTGAKVPSSLEGSEGDGDTD.

Positions 32–75 (AGNKVPPALASHQPDRKGRGGWVWEETEHPAKRVKGGEDEEPPR) are disordered. Over residues 57-68 (ETEHPAKRVKGG) the composition is skewed to basic and acidic residues. Asp142 (nucleophile) is an active-site residue. Residues 403 to 423 (ADTGAKVPSSLEGSEGDGDTD) form a disordered region. 2 positions are modified to phosphoserine: Ser411 and Ser416. Residue Thr422 is modified to Phosphothreonine.

Belongs to the tRNA pseudouridine synthase TruA family. Monomer. Forms a complex with RARG and the SRA1 RNA in the nucleus.

The protein resides in the nucleus. Its subcellular location is the cytoplasm. It is found in the mitochondrion. It catalyses the reaction a uridine in tRNA = a pseudouridine in tRNA. It carries out the reaction uridine(38/39/40) in tRNA = pseudouridine(38/39/40) in tRNA. The catalysed reaction is a uridine in mRNA = a pseudouridine in mRNA. Functionally, pseudouridylate synthase that catalyzes pseudouridylation of tRNAs and mRNAs. Acts on positions 27/28 in the anticodon stem and also positions 34 and 36 in the anticodon of an intron containing tRNA. Also catalyzes pseudouridylation of mRNAs: mediates pseudouridylation of mRNAs with the consensus sequence 5'-UGUAG-3'. Acts as a regulator of pre-mRNA splicing by mediating pseudouridylation of pre-mRNAs at locations associated with alternatively spliced regions. Pseudouridylation of pre-mRNAs near splice sites directly regulates mRNA splicing and mRNA 3'-end processing. Involved in regulation of nuclear receptor activity through pseudouridylation of SRA1 mRNA. Does not form pseudouridine when expressed in vitro. This Mus musculus (Mouse) protein is Pseudouridylate synthase 1 homolog.